The sequence spans 804 residues: Phenylalanine--tRNA ligase beta subunit (804 aa).

The tRNA-binding domain maps to 38-148 (RAAFRAFTIA…ENAPVGTSFA (111 aa)). Positions 401–476 (HTARVIDFPV…RIHGINRIDP (76 aa)) constitute a B5 domain. Residues Asp-454, Asp-460, Glu-463, and Glu-464 each contribute to the Mg(2+) site. The FDX-ACB domain maps to 710–803 (SLFQSLKRDY…VAKQTGGVLR (94 aa)).

This sequence belongs to the phenylalanyl-tRNA synthetase beta subunit family. Type 1 subfamily. Tetramer of two alpha and two beta subunits. Requires Mg(2+) as cofactor.

It is found in the cytoplasm. The enzyme catalyses tRNA(Phe) + L-phenylalanine + ATP = L-phenylalanyl-tRNA(Phe) + AMP + diphosphate + H(+). This is Phenylalanine--tRNA ligase beta subunit from Brucella abortus (strain 2308).